The chain runs to 98 residues: ESAT-6-like protein EsxM (98 aa).

The protein belongs to the WXG100 family. CFP-10 subfamily.

It localises to the secreted. Functionally, alters the host macrophage cytoskeleton and enhances macrophage motility. Promotes granuloma efflux, extrapulmonary dissemination of infection and bone disease. In Mycobacterium marinum (strain ATCC BAA-535 / M), this protein is ESAT-6-like protein EsxM.